The chain runs to 256 residues: Protein crossbronx-like (256 aa).

The 163-residue stretch at 17 to 179 folds into the UBC core domain; the sequence is NQGYKVLAEY…AKVSILWSCQ (163 aa).

This sequence belongs to the ubiquitin-conjugating enzyme family. FTS subfamily.

This is Protein crossbronx-like from Drosophila virilis (Fruit fly).